Reading from the N-terminus, the 544-residue chain is Chaperonin GroEL (544 aa).

ATP-binding positions include 30 to 33, lysine 51, 87 to 91, glycine 415, 479 to 481, and aspartate 495; these read TLGP, DGTTT, and NAA.

It belongs to the chaperonin (HSP60) family. In terms of assembly, forms a cylinder of 14 subunits composed of two heptameric rings stacked back-to-back. Interacts with the co-chaperonin GroES.

It localises to the cytoplasm. It carries out the reaction ATP + H2O + a folded polypeptide = ADP + phosphate + an unfolded polypeptide.. Its function is as follows. Together with its co-chaperonin GroES, plays an essential role in assisting protein folding. The GroEL-GroES system forms a nano-cage that allows encapsulation of the non-native substrate proteins and provides a physical environment optimized to promote and accelerate protein folding. The polypeptide is Chaperonin GroEL (Francisella tularensis subsp. tularensis (strain SCHU S4 / Schu 4)).